Consider the following 448-residue polypeptide: Protein arginine N-methyltransferase 2 (448 aa).

2 interaction with ESR1 regions span residues Met-1–Lys-289 and Lys-145–Ala-287. The region spanning Leu-42–Glu-101 is the SH3 domain. 2 positions are modified to asymmetric dimethylarginine: Arg-73 and Arg-84. The segment at His-95–Val-219 is interaction with RB1. The 304-residue stretch at Asp-111–Glu-414 folds into the SAM-dependent MTase PRMT-type domain. 5 residues coordinate S-adenosyl-L-methionine: His-124, Arg-133, Gly-157, Glu-180, and Glu-209. Active-site residues include Glu-223 and Glu-232.

It belongs to the class I-like SAM-binding methyltransferase superfamily. Protein arginine N-methyltransferase family. In terms of assembly, self-associates. Interacts with HNRNPUL1. Interacts with NFKBIA. Interacts with NCOA6 coactivator. Interacts (via SH3 domain) with PRMT8. Interacts with AR. Interacts with ESR1, ESR2, PGR, PPARG, RARA, RXRA and THRB. Interacts with RB1 and E2F1. As to expression, expressed in liver, pancreas, lung, brain, skeletal muscle, heart, muscle and fat.

It is found in the cytoplasm. It localises to the nucleus. The enzyme catalyses L-arginyl-[protein] + 2 S-adenosyl-L-methionine = N(omega),N(omega)-dimethyl-L-arginyl-[protein] + 2 S-adenosyl-L-homocysteine + 2 H(+). Functionally, arginine methyltransferase that methylates the guanidino nitrogens of arginyl residues in proteins such as STAT3, FBL, histone H4. May inhibit NF-kappa-B transcription, and promote apoptosis. Represses E2F1 transcriptional activity (in a RB1-dependent manner). Has a negative regulation effect on G1 to S transition of mitotic cell cycle. Involved in growth regulation. Acts as a coactivator (with NCOA2) of the androgen receptor (AR)-mediated transactivation. Acts as a coactivator (with estrogen) of estrogen receptor (ER)-mediated transactivation. Enhances PGR, PPARG, RARA-mediated transactivation. In Mus musculus (Mouse), this protein is Protein arginine N-methyltransferase 2 (Prmt2).